Consider the following 597-residue polypeptide: Kelch-like protein 21 (597 aa).

The BTB domain maps to 35–103 (LDVTLEAAGG…SYTGRVAVSG (69 aa)). Residues 138–239 (CLDMQDFAEA…RRFYLLAHVE (102 aa)) enclose the BACK domain. 6 Kelch repeats span residues 287–335 (ILVL…ALGN), 336–382 (DIYV…VLDG), 384–422 (LYVV…ACRG), 424–463 (LYAI…SFAP), 464–512 (KTVT…VLGG), and 513–560 (KLYV…SIFR). The disordered stretch occupies residues 570–597 (GRGFELDGGSSDMDVGQPRPPQNPAELH). Over residues 587–597 (PRPPQNPAELH) the composition is skewed to pro residues.

As to quaternary structure, component of the BCR(KLHL21) E3 ubiquitin ligase complex, at least composed of CUL3, KLHL21 and RBX1.

The protein resides in the cytoplasm. It localises to the cytoskeleton. It is found in the spindle. Its pathway is protein modification; protein ubiquitination. In terms of biological role, substrate-specific adapter of a BCR (BTB-CUL3-RBX1) E3 ubiquitin-protein ligase complex required for efficient chromosome alignment and cytokinesis. The BCR(KLHL21) E3 ubiquitin ligase complex regulates localization of the chromosomal passenger complex (CPC) from chromosomes to the spindle midzone in anaphase and mediates the ubiquitination of AURKB. Ubiquitination of AURKB by BCR(KLHL21) E3 ubiquitin ligase complex may not lead to its degradation by the proteasome. The chain is Kelch-like protein 21 (KLHL21) from Bos taurus (Bovine).